Consider the following 205-residue polypeptide: Outer-membrane lipoprotein LolB (205 aa).

An N-terminal signal peptide occupies residues 1-17 (MRLRLFLAASALALLSG). A lipid anchor (N-palmitoyl cysteine) is attached at cysteine 18. The S-diacylglycerol cysteine moiety is linked to residue cysteine 18.

This sequence belongs to the LolB family. As to quaternary structure, monomer.

Its subcellular location is the cell outer membrane. Functionally, plays a critical role in the incorporation of lipoproteins in the outer membrane after they are released by the LolA protein. The chain is Outer-membrane lipoprotein LolB from Pseudomonas aeruginosa (strain LESB58).